A 282-amino-acid chain; its full sequence is Transcription factor MYB20 (282 aa).

HTH myb-type domains are found at residues 9–61 (KVGL…TNYL) and 62–116 (RPDL…KKKL). DNA-binding regions (H-T-H motif) lie at residues 37–61 (WRAV…TNYL) and 89–112 (WSKI…NTHI).

As to expression, expressed in chalaza of mature seeds, cotyledons, rosette leaves, cauline leaves, veins of stems, mature siliques, sepals and styles. Expressed at low levels in roots.

It is found in the nucleus. Transcription factor that acts as a positive regulator of abscisic acid (ABA) signaling in response to salt stress. Acts as a negative regulator ABI1, ABI2 and PP2CA, which are protein phosphatases 2C acting as negative regulator of ABA signaling. Binds to the DNA specific sequence and core element 5'-ACGT-3' found in the promoters of ABI1 and PP2CA to negatively regulate their expression during ABA-dependent salt stress response. This chain is Transcription factor MYB20, found in Arabidopsis thaliana (Mouse-ear cress).